A 223-amino-acid polypeptide reads, in one-letter code: Chalcone--flavanone isomerase (223 aa).

Substrate contacts are provided by threonine 50, asparagine 114, and threonine 191.

The protein belongs to the chalcone isomerase family.

The enzyme catalyses a chalcone = a flavanone.. It functions in the pathway secondary metabolite biosynthesis; flavonoid biosynthesis. Functionally, catalyzes the intramolecular cyclization of bicyclic chalcones into tricyclic (S)-flavanones. Responsible for the isomerization of 4,2',4',6'-tetrahydroxychalcone (also termed chalcone) into naringenin. This is Chalcone--flavanone isomerase (CHI) from Pisum sativum (Garden pea).